Consider the following 817-residue polypeptide: MAGVSAVSKVSSLVCDLSSTSGLIRRTANPHPNVWGYDLVHSLKSPYIDSSYRERAEVLVSEIKAMLNPAITGDGESMITPSAYDTAWVARVPAIDGSARPQFPQTVDWILKNQLKDGSWGIQSHFLLSDRLLATLSCVLVLLKWNVGDLQVEQGIEFIKSNLELVKDETDQDSLVTDFEIIFPSLLREAQSLRLGLPYDLPYIHLLQTKRQERLAKLSREEIYAVPSPLLYSLEGIQDIVEWERIMEVQSQDGSFLSSPASTACVFMHTGDAKCLEFLNSVMIKFGNFVPCLYPVDLLERLLIVDNIVRLGIYRHFEKEIKEALDYVYRHWNERGIGWGRLNPIADLETTALGFRLLRLHRYNVSPAIFDNFKDANGKFICSTGQFNKDVASMLNLYRASQLAFPGENILDEAKSFATKYLREALEKSETSSAWNNKQNLSQEIKYALKTSWHASVPRVEAKRYCQVYRPDYARIAKCVYKLPYVNNEKFLELGKLDFNIIQSIHQEEMKNVTSWFRDSGLPLFTFARERPLEFYFLVAAGTYEPQYAKCRFLFTKVACLQTVLDDMYDTYGTLDELKLFTEAVRRWDLSFTENLPDYMKLCYQIYYDIVHEVAWEAEKEQGRELVSFFRKGWEDYLLGYYEEAEWLAAEYVPTLDEYIKNGITSIGQRILLLSGVLIMDGQLLSQEALEKVDYPGRRVLTELNSLISRLADDTKTYKAEKARGELASSIECYMKDHPECTEEEALDHIYSILEPAVKELTREFLKPDDVPFACKKMLFEETRVTMVIFKDGDGFGVSKLEVKDHIKECLIEPLPL.

The Mg(2+) site is built by Asp-566, Asp-570, Asp-713, Thr-717, and Glu-721. The DDXXD motif signature appears at 566 to 570 (DDMYD).

It belongs to the terpene synthase family. Tpsd subfamily. Mg(2+) is required as a cofactor. Requires Mn(2+) as cofactor. The cofactor is K(+).

The protein resides in the cytoplasm. The enzyme catalyses (2E,6E)-farnesyl diphosphate = (E,R)-alpha-bisabolene + diphosphate. It participates in terpene metabolism; oleoresin biosynthesis. Converts farnesyl diphosphate to alpha-bisabolene. Involved in defensive oleoresin formation in conifers in response to insect attack or other injury. Involved in sesquiterpene (C15) olefins biosynthesis. The sequence is that of Alpha-bisabolene synthase (ag1) from Abies grandis (Grand fir).